The following is a 200-amino-acid chain: Sorting nexin-10 (200 aa).

A required for interaction with ATP6V1D region spans residues 8–125; sequence EEFVSVWVRD…SLHLFLQSHL (118 aa). The 118-residue stretch at 10–127 folds into the PX domain; sequence FVSVWVRDPR…HLFLQSHLNS (118 aa). The a 1,2-diacyl-sn-glycero-3-phospho-(1D-myo-inositol-3-phosphate) site is built by arginine 53, lysine 79, and arginine 94. Residues 156–167 are compositionally biased toward basic and acidic residues; the sequence is FPEEEEGKKEND. Positions 156–200 are disordered; sequence FPEEEEGKKENDIDYDSESSSSGFGHSSDDSSSHGCKMSTAPQES.

Belongs to the sorting nexin family. Interacts with ATP6V1D; may play a role in ciliogenesis.

The protein resides in the cytoplasm. It localises to the endosome membrane. It is found in the cytoskeleton. Its subcellular location is the microtubule organizing center. The protein localises to the centrosome. Probable phosphoinositide-binding protein involved in protein sorting and membrane trafficking in endosomes. Plays a role in cilium biogenesis through regulation of the transport and the localization of proteins to the cilium. Required for the localization to the cilium of V-ATPase subunit ATP6V1D and ATP6V0D1, and RAB8A. Involved in osteoclast differentiation and therefore bone resorption. In Bos taurus (Bovine), this protein is Sorting nexin-10 (SNX10).